Consider the following 695-residue polypeptide: Threonine--tRNA ligase (695 aa).

One can recognise a TGS domain in the interval 1 to 66; that stretch reads MSAPARPAPA…DTDVEVTPVA (66 aa). The segment at 263-569 is catalytic; the sequence is DHRKLGVELD…LTEHYAGAFP (307 aa). The Zn(2+) site is built by cysteine 368, histidine 419, and histidine 546.

Belongs to the class-II aminoacyl-tRNA synthetase family. In terms of assembly, homodimer. Requires Zn(2+) as cofactor.

It is found in the cytoplasm. The catalysed reaction is tRNA(Thr) + L-threonine + ATP = L-threonyl-tRNA(Thr) + AMP + diphosphate + H(+). Its function is as follows. Catalyzes the attachment of threonine to tRNA(Thr) in a two-step reaction: L-threonine is first activated by ATP to form Thr-AMP and then transferred to the acceptor end of tRNA(Thr). Also edits incorrectly charged L-seryl-tRNA(Thr). The chain is Threonine--tRNA ligase from Mycolicibacterium gilvum (strain PYR-GCK) (Mycobacterium gilvum (strain PYR-GCK)).